The primary structure comprises 520 residues: Cytochrome P450 716A67 (520 aa).

The helical transmembrane segment at 4 to 24 (SLAIYYGIILITVTLGLVYTW) threads the bilayer. Cysteine 466 lines the heme pocket.

Belongs to the cytochrome P450 family. The cofactor is heme.

The protein localises to the membrane. Catalyzes hydroxylation at the C-2 position of different intermediates of the hemolytic sapogenin biosynthetic pathway downstream of oleanolic acid synthesis. The chain is Cytochrome P450 716A67 from Medicago truncatula (Barrel medic).